Reading from the N-terminus, the 315-residue chain is Protein sprouty homolog 2 (315 aa).

The span at 1–15 shows a compositional bias: polar residues; sequence MEARAQSGNGSQPLL. The disordered stretch occupies residues 1–140; the sequence is MEARAQSGNG…SEQRLLGSSF (140 aa). The span at 20–32 shows a compositional bias: basic and acidic residues; that stretch reads DGGRPRGEPDPRD. Low complexity predominate over residues 108 to 140; sequence SRSISTVSSGSRSSTRTSTSSSSSEQRLLGSSF. Residues 118–315 are required for interaction with CAV1; sequence SRSSTRTSTS…VPRRNFEKPT (198 aa). The SPR domain occupies 177–291; the sequence is RCEDCGKCKC…CYDRVNRPGC (115 aa). The tract at residues 178–315 is required for interaction with TESK1; the sequence is CEDCGKCKCK…VPRRNFEKPT (138 aa).

Belongs to the sprouty family. Forms heterodimers with SPRY1. Forms a tripartite complex containing GAB1, METTL13 and SPRY2. Within the complex interacts with METTL13. Interacts with RAF1. Interacts (via C-terminus) with TESK1 (via C-terminus); the interaction disrupts SPRY2 interaction with GRB2, potentially via disruption of SPRY2 serine dephosphorylation. Interacts with PPP2R1A/PP2A-A and PPP2CA/PP2A-C; the interaction with PPP2CA/PP2A-C is inhibited by interaction with TESK1, possibly by vesicular sequestration of SPRY2. Inhibition of the interaction with the serine/threonine-protein phosphatase 2A (PP2A) holoenzyme results in loss of PP2A-mediated dephosphorylation, resulting in the loss of SPRY2 interaction with GRB2. Interacts with GRB2. Interacts with CBL/C-CBL; the interaction inhibits CBL-mediated ubiquitination of EGFR. Interacts (via C-terminus) with CAV1 (via C-terminus). Cleaved at Pro-144 by the prolyl endopeptidase FAP (seprase) activity (in vitro).

The protein resides in the cytoplasm. The protein localises to the cytoskeleton. It is found in the cell projection. It localises to the ruffle membrane. Functionally, antagonist of fibroblast growth factor (FGF) pathways via inhibition of FGF-mediated phosphorylation of ERK1/2. Thereby acts as an antagonist of FGF-induced retinal lens fiber differentiation, may inhibit limb bud outgrowth and may negatively modulate respiratory organogenesis. Inhibits TGFB-induced epithelial-to-mesenchymal transition in retinal lens epithelial cells. Inhibits CBL/C-CBL-mediated EGFR ubiquitination. This chain is Protein sprouty homolog 2 (SPRY2), found in Pongo abelii (Sumatran orangutan).